Here is a 175-residue protein sequence, read N- to C-terminus: MSATDDLVSALRAADAVQFGEFELSHGGTSEYYVDKYLFETDPECLSAIAAAFADRIDEDTTLAGVALGGVPLAAATATEAGVPYVIARKQAKEYGTANRIEGRLDDGEEVVVVEDIATTGQSAVDAVDALRDAGATVNRALIVVDREEGGRELLAEHGVEMAALVTASDLLDAE.

Residues R89, K90, K93, and 115-123 (EDIATTGQS) each bind 5-phospho-alpha-D-ribose 1-diphosphate. 2 residues coordinate orotate: T119 and R147.

Belongs to the purine/pyrimidine phosphoribosyltransferase family. PyrE subfamily. In terms of assembly, homodimer. Mg(2+) is required as a cofactor.

The catalysed reaction is orotidine 5'-phosphate + diphosphate = orotate + 5-phospho-alpha-D-ribose 1-diphosphate. The protein operates within pyrimidine metabolism; UMP biosynthesis via de novo pathway; UMP from orotate: step 1/2. Functionally, catalyzes the transfer of a ribosyl phosphate group from 5-phosphoribose 1-diphosphate to orotate, leading to the formation of orotidine monophosphate (OMP). This Halobacterium salinarum (strain ATCC 700922 / JCM 11081 / NRC-1) (Halobacterium halobium) protein is Orotate phosphoribosyltransferase.